A 573-amino-acid chain; its full sequence is 60 kDa heat shock protein, mitochondrial (573 aa).

The N-terminal 26 residues, 1 to 26 (MLRLPTVLRQMRPVSRALAPHLTRAY), are a transit peptide targeting the mitochondrion. At Lys-31 the chain carries N6-succinyllysine. Phosphoserine is present on residues Ser-67 and Ser-70. An ATP-binding site is contributed by Lys-75. N6-acetyllysine is present on Lys-75. The residue at position 82 (Lys-82) is an N6-acetyllysine; alternate. N6-succinyllysine; alternate is present on Lys-82. An N6-acetyllysine modification is found at Lys-87. A Phosphotyrosine modification is found at Tyr-90. Lys-91 is modified (N6-acetyllysine). ATP is bound at residue 111–115 (DGTTT). At Lys-125 the chain carries N6-acetyllysine; alternate. Lys-125 bears the N6-succinyllysine; alternate mark. N6-acetyllysine is present on Lys-130. Lys-133 is subject to N6-acetyllysine; alternate. N6-succinyllysine; alternate is present on Lys-133. Lys-133 is subject to N6-malonyllysine; alternate. Lys-156 is subject to N6-acetyllysine. 5 positions are modified to N6-acetyllysine; alternate: Lys-191, Lys-202, Lys-205, Lys-218, and Lys-236. N6-succinyllysine; alternate occurs at positions 191, 202, 205, 218, and 236. Lys-249 is modified (N6-acetyllysine). Residue Lys-250 is modified to N6-acetyllysine; alternate. Lys-250 carries the N6-succinyllysine; alternate modification. N6-acetyllysine occurs at positions 269 and 292. Lys-301 carries the N6-succinyllysine modification. At Lys-314 the chain carries N6-acetyllysine. At Lys-352 the chain carries N6-acetyllysine; alternate. Lys-352 is subject to N6-succinyllysine; alternate. Residues Lys-359 and Lys-389 each carry the N6-acetyllysine modification. Lys-396 carries the post-translational modification N6-acetyllysine; alternate. At Lys-396 the chain carries N6-succinyllysine; alternate. Ser-410 is subject to Phosphoserine. Gly-440 contacts ATP. Residue Lys-455 is modified to N6-acetyllysine; alternate. At Lys-455 the chain carries N6-succinyllysine; alternate. At Lys-469 the chain carries N6-acetyllysine. N6-acetyllysine; alternate is present on Lys-481. Residue Lys-481 is modified to N6-succinyllysine; alternate. A Phosphoserine modification is found at Ser-488. Asp-520 lines the ATP pocket. Residue Lys-551 forms a Glycyl lysine isopeptide (Lys-Gly) (interchain with G-Cter in SUMO2) linkage.

The protein belongs to the chaperonin (HSP60) family. As to quaternary structure, homoheptamer arranged in a ring structure. The functional units of these chaperonins consist of heptameric rings of the large subunit Hsp60, which function as a back-to-back double ring. Interacts with 2 heptameric Hsp10 rings to form the symmetrical football complex. Interacts with HRAS. Interacts with ATAD3A. Interacts with ETFBKMT and EEF1AKMT3. Interacts with MFHAS1.

The protein resides in the mitochondrion matrix. The enzyme catalyses ATP + H2O + a folded polypeptide = ADP + phosphate + an unfolded polypeptide.. Its function is as follows. Chaperonin implicated in mitochondrial protein import and macromolecular assembly. Together with Hsp10, facilitates the correct folding of imported proteins. May also prevent misfolding and promote the refolding and proper assembly of unfolded polypeptides generated under stress conditions in the mitochondrial matrix. The functional units of these chaperonins consist of heptameric rings of the large subunit Hsp60, which function as a back-to-back double ring. In a cyclic reaction, Hsp60 ring complexes bind one unfolded substrate protein per ring, followed by the binding of ATP and association with 2 heptameric rings of the co-chaperonin Hsp10. This leads to sequestration of the substrate protein in the inner cavity of Hsp60 where, for a certain period of time, it can fold undisturbed by other cell components. Synchronous hydrolysis of ATP in all Hsp60 subunits results in the dissociation of the chaperonin rings and the release of ADP and the folded substrate protein. This is 60 kDa heat shock protein, mitochondrial (Hspd1) from Rattus norvegicus (Rat).